The sequence spans 423 residues: MTLQAAPRSAAAQQREPDLRQEVHDAARRARVAARLLAVVPTGVKDRALHAAADAILAHVDRILSANAEDLDAARAADTPAAMLDRLALNPQRVDGIAAGLRQVAGLPDPVGEVLRGYTLPNGLQLRQQRVPLGVVGMIYEGRPNVTVDAFGLTLKSGNAALLRGSSSAARSNEALVNVLRSALDSEQLPADAVQLLSSADRSTVTHLIQARGLVDVAIPRGGAGLIDAVVRDAQVPTIETGVGNCHVYVHEAADLDVAERILLNSKTRRPSVCNAAETLLVDAAIAEHAMPRLIGALQDAGVTVHLDADEQDLRREYLAMEIAVAVVDGVDGAIAHINEYGTGHTEAIVTTNLAAAQRFTERIDAAAVMVNASTAFTDGEQFGFGAEIGISTQKLHARGPMGLPELTSTKWIVWGEGHTRPA.

The span at 1 to 14 shows a compositional bias: low complexity; that stretch reads MTLQAAPRSAAAQQ. Residues 1 to 25 are disordered; sequence MTLQAAPRSAAAQQREPDLRQEVHD. Basic and acidic residues predominate over residues 15–25; sequence REPDLRQEVHD.

It belongs to the gamma-glutamyl phosphate reductase family.

The protein localises to the cytoplasm. The catalysed reaction is L-glutamate 5-semialdehyde + phosphate + NADP(+) = L-glutamyl 5-phosphate + NADPH + H(+). It functions in the pathway amino-acid biosynthesis; L-proline biosynthesis; L-glutamate 5-semialdehyde from L-glutamate: step 2/2. Catalyzes the NADPH-dependent reduction of L-glutamate 5-phosphate into L-glutamate 5-semialdehyde and phosphate. The product spontaneously undergoes cyclization to form 1-pyrroline-5-carboxylate. In Mycobacterium marinum (strain ATCC BAA-535 / M), this protein is Gamma-glutamyl phosphate reductase.